The primary structure comprises 433 residues: Enolase (433 aa).

Gln-167 serves as a coordination point for (2R)-2-phosphoglycerate. Glu-209 (proton donor) is an active-site residue. Residues Asp-246, Glu-291, and Asp-318 each contribute to the Mg(2+) site. (2R)-2-phosphoglycerate-binding residues include Lys-343, Arg-372, Ser-373, and Lys-394. Lys-343 serves as the catalytic Proton acceptor.

The protein belongs to the enolase family. In terms of assembly, component of the RNA degradosome, a multiprotein complex involved in RNA processing and mRNA degradation. Mg(2+) is required as a cofactor.

The protein localises to the cytoplasm. Its subcellular location is the secreted. It is found in the cell surface. It carries out the reaction (2R)-2-phosphoglycerate = phosphoenolpyruvate + H2O. Its pathway is carbohydrate degradation; glycolysis; pyruvate from D-glyceraldehyde 3-phosphate: step 4/5. Functionally, catalyzes the reversible conversion of 2-phosphoglycerate (2-PG) into phosphoenolpyruvate (PEP). It is essential for the degradation of carbohydrates via glycolysis. In Pasteurella multocida (strain Pm70), this protein is Enolase.